The primary structure comprises 427 residues: Peptidase B (427 aa).

Mn(2+)-binding residues include Lys-195 and Asp-200. Residue Lys-207 is part of the active site. Positions 218, 277, and 279 each coordinate Mn(2+). Arg-281 is a catalytic residue.

This sequence belongs to the peptidase M17 family. In terms of assembly, homohexamer. It depends on Mn(2+) as a cofactor.

Its subcellular location is the cytoplasm. It catalyses the reaction Release of an N-terminal amino acid, Xaa, from a peptide or arylamide. Xaa is preferably Glu or Asp but may be other amino acids, including Leu, Met, His, Cys and Gln.. Functionally, probably plays an important role in intracellular peptide degradation. The chain is Peptidase B from Shigella flexneri serotype 5b (strain 8401).